The chain runs to 149 residues: MVLSNYLVSFACTQSFFFFASNFIESPPALLKKAFLPNLNRTRSRFPPINYVLLAPLSSYCKWTFQRGYACPVSFLKQAHTDALQLVFFTRCIIWAVFHYRFRVGALTKRARPFVYNRPKRKNINNQEADTKYRSTIKLTSTVTLNLLY.

This is an uncharacterized protein from Saccharomyces cerevisiae (strain ATCC 204508 / S288c) (Baker's yeast).